Here is a 114-residue protein sequence, read N- to C-terminus: MKYVAAYLMTVLGGNEAPTAADVSRVLEPVGAEVNPEVLKTLIDAMQGKAAHEVISAGLEKLQKVPCGGGAAAAAPAAAAAAGGGDSSSAAKETKKEEPEEEEEDGDMGLSLFD.

Positions 76-91 are enriched in low complexity; the sequence is PAAAAAAGGGDSSSAA. The tract at residues 76–114 is disordered; sequence PAAAAAAGGGDSSSAAKETKKEEPEEEEEDGDMGLSLFD.

It belongs to the eukaryotic ribosomal protein P1/P2 family. In terms of assembly, P1 and P2 exist as dimers at the large ribosomal subunit. In terms of processing, phosphorylated.

Plays an important role in the elongation step of protein synthesis. In Eimeria tenella (Coccidian parasite), this protein is Large ribosomal subunit protein P2.